The chain runs to 541 residues: Pheromone B beta 1 receptor (541 aa).

Over 1-3 (MHP) the chain is Extracellular. A helical transmembrane segment spans residues 4 to 24 (EFAPVAFLSAASLALPLPWHW). Residues 25–33 (RAGNVATLS) are Cytoplasmic-facing. A helical transmembrane segment spans residues 34-54 (IIAWLFIMNMIYGINAVIWAG). The Extracellular segment spans residues 55-69 (SARITAVVYCDITTK). The helical transmembrane segment at 70–90 (LTIGGNFALPAACLCLCIHLE) threads the bilayer. Residues 91–109 (RVASVRAAQTTAADKRRRT) lie on the Cytoplasmic side of the membrane. Residues 110–130 (IFELAMCWLLPIIFMALHYVV) traverse the membrane as a helical segment. The Extracellular portion of the chain corresponds to 131–150 (QGHRFDIVEDFGCRPATYYS). Residues 151–171 (IPAIFIVWVPPLTMAAASLVY) form a helical membrane-spanning segment. The Cytoplasmic portion of the chain corresponds to 172–205 (ASLAIRHFMHRRLSFAMHLQARSSALTTSRYLRL). Residues 206 to 226 (ILMAIVQLVWLVVTTAYTLWF) form a helical membrane-spanning segment. The Extracellular segment spans residues 227 to 264 (SSMTLNLRPWTTWADVHSNFGRIQTWPAIITPAVILRG). Residues 265–285 (ACTLWWMVPASTWIFVAFFAF) traverse the membrane as a helical segment. The Cytoplasmic portion of the chain corresponds to 286 to 541 (GNDAVEEYKR…IASVFPGGRR (256 aa)). Disordered stretches follow at residues 364 to 393 (TTST…PLDS) and 414 to 541 (YTIE…GGRR). Pro residues predominate over residues 372–385 (MPPPYSLPPPPPPQ). Positions 420-429 (PETPSTSSST) are enriched in low complexity. Composition is skewed to pro residues over residues 467–478 (IPAPPSLPPPTH) and 493–502 (SRPPAFPPYP).

This sequence belongs to the G-protein coupled receptor 4 family.

Its subcellular location is the membrane. Its function is as follows. Receptor for the BBP1 pheromone, a prenylated mating factor. This chain is Pheromone B beta 1 receptor (BBR1), found in Schizophyllum commune (Split gill fungus).